The following is a 223-amino-acid chain: Ras-related protein Rab-21 (223 aa).

At alanine 2 the chain carries N-acetylalanine. GTP-binding residues include glycine 26, glycine 29, lysine 30, threonine 31, serine 32, asparagine 43, aspartate 44, histidine 46, threonine 48, and threonine 49. Mg(2+) is bound at residue threonine 31. A Switch 1 motif is present at residues 41–54 (KFNDKHITTLQASF). The Mg(2+) site is built by threonine 49 and aspartate 72. The Switch 2 signature appears at 74-92 (AGQERFHALGPIYYRDSNG). GTP is bound by residues glycine 75, asparagine 130, lysine 131, aspartate 133, alanine 161, and lysine 162. Residues cysteine 219 and cysteine 220 are each lipidated (S-geranylgeranyl cysteine). Cysteine methyl ester is present on cysteine 220. The propeptide at 221–223 (SSG) is removed in mature form.

The protein belongs to the small GTPase superfamily. Rab family. In terms of assembly, interacts with the cytoplasmic tail of integrins ITGA1, ITGA2, ITGA5, ITGA6, ITGA11 and ITGB1; this interaction is dependent upon its GDP/GTP cycle. Interacts with ANKRD27. Interacts (active GTP-bound form) with TMED10; the interaction is indirect and regulates TMED10 abundance and localization at the Golgi. It depends on Mg(2+) as a cofactor.

It localises to the endoplasmic reticulum membrane. Its subcellular location is the golgi apparatus. The protein resides in the trans-Golgi network. It is found in the golgi apparatus membrane. The protein localises to the early endosome membrane. It localises to the cytoplasmic vesicle membrane. Its subcellular location is the cleavage furrow. The protein resides in the cell projection. It is found in the neuron projection. The catalysed reaction is GTP + H2O = GDP + phosphate + H(+). Regulated by guanine nucleotide exchange factors (GEFs) including ANKRD27 and RABGEF1, which promote the exchange of bound GDP for free GTP. Regulated by GTPase activating proteins (GAPs) which increase the GTP hydrolysis activity. Inhibited by GDP dissociation inhibitors (GDIs). The small GTPases Rab are key regulators of intracellular membrane trafficking, from the formation of transport vesicles to their fusion with membranes. Rabs cycle between an inactive GDP-bound form and an active GTP-bound form that is able to recruit to membranes different sets of downstream effectors directly responsible for vesicle formation, movement, tethering and fusion. RAB21 is involved in membrane trafficking control. Regulates integrin internalization and recycling, but does not influence the traffic of endosomally translocated receptors in general. As a result, may regulate cell adhesion and migration. During the mitosis of adherent cells, controls the endosomal trafficking of integrins which is required for the successful completion of cytokinesis. Involved in neurite growth. Modulates protein levels of the cargo receptors TMED2 and TMED10, and required for appropriate Golgi localization of TMED10. This chain is Ras-related protein Rab-21 (RAB21), found in Canis lupus familiaris (Dog).